A 31-amino-acid chain; its full sequence is Branched-chain-amino-acid aminotransferase, mitochondrial (31 aa).

Residues 1-27 constitute a mitochondrion transit peptide; sequence MAAAALRQIWARKFLPVPWLLCGPRRY.

It belongs to the class-IV pyridoxal-phosphate-dependent aminotransferase family. In terms of assembly, homodimer. Requires pyridoxal 5'-phosphate as cofactor.

It localises to the mitochondrion. It catalyses the reaction L-leucine + 2-oxoglutarate = 4-methyl-2-oxopentanoate + L-glutamate. It carries out the reaction L-isoleucine + 2-oxoglutarate = (S)-3-methyl-2-oxopentanoate + L-glutamate. The enzyme catalyses L-valine + 2-oxoglutarate = 3-methyl-2-oxobutanoate + L-glutamate. Catalyzes the first reaction in the catabolism of the essential branched chain amino acids leucine, isoleucine, and valine. May also function as a transporter of branched chain alpha-keto acids. The protein is Branched-chain-amino-acid aminotransferase, mitochondrial (BCAT2) of Sus scrofa (Pig).